Consider the following 242-residue polypeptide: Large ribosomal subunit protein uL3 (242 aa).

Residues 131–165 (GRATHGNSVSHRTHGSTGQRQDPGKVFKGKKMAGH) are disordered. Residues 135–150 (HGNSVSHRTHGSTGQR) are compositionally biased toward polar residues. N5-methylglutamine is present on Gln-151.

It belongs to the universal ribosomal protein uL3 family. Part of the 50S ribosomal subunit. Forms a cluster with proteins L14 and L19. In terms of processing, methylated by PrmB.

Functionally, one of the primary rRNA binding proteins, it binds directly near the 3'-end of the 23S rRNA, where it nucleates assembly of the 50S subunit. This is Large ribosomal subunit protein uL3 from Chelativorans sp. (strain BNC1).